Here is a 21-residue protein sequence, read N- to C-terminus: Bombinin-H1/H3 (21 aa).

I2 carries the D-allo-isoleucine; in form H3 modification. I20 carries the post-translational modification Isoleucine amide.

It belongs to the bombinin family. As to expression, expressed by the skin glands.

It localises to the secreted. Has antimicrobial and hemolytic activities. This is Bombinin-H1/H3 from Bombina variegata (Yellow-bellied toad).